We begin with the raw amino-acid sequence, 402 residues long: Plasminogen activator inhibitor 1 (402 aa).

The signal sequence occupies residues 1–22; the sequence is MQMSSALACLILGLVLVSGKGF. 3 N-linked (GlcNAc...) asparagine glycosylation sites follow: N232, N288, and N352.

This sequence belongs to the serpin family. As to quaternary structure, forms a heterodimer with TMPRSS7. Interacts with VTN. Binds LRP1B; binding is followed by internalization and degradation. Interacts with PPP1CB. In complex with PLAU/uPA, interacts with PLAUR/uPAR. Interacts with SORL1 and LRP1, either alone or in complex with PLAU; these interactions are abolished in the presence of LRPAP1/RAP. The ternary complex composed of PLAUR-PLAU-PAI1 also interacts with SORL1. Interacts with PLAT/tPA. Also interacts with SORL1, when complexed to PLAT/tPA.

Its subcellular location is the secreted. Serine protease inhibitor. Inhibits TMPRSS7. Is a primary inhibitor of tissue-type plasminogen activator (PLAT) and urokinase-type plasminogen activator (PLAU). As PLAT inhibitor, it is required for fibrinolysis down-regulation and is responsible for the controlled degradation of blood clots. As PLAU inhibitor, it is involved in the regulation of cell adhesion and spreading. Acts as a regulator of cell migration, independently of its role as protease inhibitor. It is required for stimulation of keratinocyte migration during cutaneous injury repair. Involved in cellular and replicative senescence. Plays a role in alveolar type 2 cells senescence in the lung. Is involved in the regulation of cementogenic differentiation of periodontal ligament stem cells, and regulates odontoblast differentiation and dentin formation during odontogenesis. The chain is Plasminogen activator inhibitor 1 (Serpine1) from Mus musculus (Mouse).